The sequence spans 450 residues: UDP-N-acetylmuramoylalanine--D-glutamate ligase (450 aa).

Residue 119-125 (GTNGKTT) coordinates ATP.

The protein belongs to the MurCDEF family.

Its subcellular location is the cytoplasm. The enzyme catalyses UDP-N-acetyl-alpha-D-muramoyl-L-alanine + D-glutamate + ATP = UDP-N-acetyl-alpha-D-muramoyl-L-alanyl-D-glutamate + ADP + phosphate + H(+). It participates in cell wall biogenesis; peptidoglycan biosynthesis. Its function is as follows. Cell wall formation. Catalyzes the addition of glutamate to the nucleotide precursor UDP-N-acetylmuramoyl-L-alanine (UMA). The sequence is that of UDP-N-acetylmuramoylalanine--D-glutamate ligase from Lactococcus lactis subsp. lactis (strain IL1403) (Streptococcus lactis).